The following is a 335-amino-acid chain: DNA polymerase beta (335 aa).

Lysine 41 participates in a covalent cross-link: Glycyl lysine isopeptide (Lys-Gly) (interchain with G-Cter in ubiquitin). Lysine 60 is a binding site for K(+). Lysine 60 is a Na(+) binding site. A Glycyl lysine isopeptide (Lys-Gly) (interchain with G-Cter in ubiquitin) cross-link involves residue lysine 61. K(+) is bound by residues leucine 62 and valine 65. Na(+) contacts are provided by leucine 62 and valine 65. Lysine 72 functions as the Nucleophile; Schiff-base intermediate with DNA; for 5'-dRP lyase activity in the catalytic mechanism. An N6-acetyllysine modification is found at lysine 72. Lysine 81 participates in a covalent cross-link: Glycyl lysine isopeptide (Lys-Gly) (interchain with G-Cter in ubiquitin). Omega-N-methylarginine; by PRMT6 is present on arginine 83. Threonine 101, valine 103, and isoleucine 106 together coordinate K(+). 3 residues coordinate Na(+): threonine 101, valine 103, and isoleucine 106. Arginine 149 serves as a coordination point for a 2'-deoxyribonucleoside 5'-triphosphate. Arginine 152 bears the Omega-N-methylarginine; by PRMT6 mark. A 2'-deoxyribonucleoside 5'-triphosphate-binding residues include serine 180, arginine 183, glycine 189, and aspartate 190. A DNA-binding region spans residues 183–192; sequence RGAESSGDMD. 3 residues coordinate Mg(2+): aspartate 190, aspartate 192, and aspartate 256.

Belongs to the DNA polymerase type-X family. Monomer. Binds single-stranded DNA (ssDNA). Interacts with APEX1, LIG1, LIG3, FEN1, PCNA and XRCC1. Interacts with HUWE1/ARF-BP1, STUB1/CHIP and USP47. Interacts with FAM168A. Requires Mg(2+) as cofactor. Post-translationally, methylation by PRMT6 stimulates the polymerase activity by enhancing DNA binding and processivity. Ubiquitinated at Lys-41, Lys-61 and Lys-81: monoubiquitinated by HUWE1/ARF-BP1. Monoubiquitinated protein is then the target of STUB1/CHIP, which catalyzes polyubiquitination from monoubiquitin, leading to degradation by the proteasome. USP47 mediates the deubiquitination of monoubiquitinated protein, preventing polyubiquitination by STUB1/CHIP and its subsequent degradation.

The protein localises to the nucleus. Its subcellular location is the cytoplasm. The enzyme catalyses DNA(n) + a 2'-deoxyribonucleoside 5'-triphosphate = DNA(n+1) + diphosphate. It catalyses the reaction a 5'-end 2'-deoxyribose-2'-deoxyribonucleotide-DNA = (2E,4S)-4-hydroxypenten-2-al-5-phosphate + a 5'-end 5'-phospho-2'-deoxyribonucleoside-DNA + H(+). The catalysed reaction is 2'-deoxyribonucleotide-(2'-deoxyribose 5'-phosphate)-2'-deoxyribonucleotide-DNA = a 3'-end 2'-deoxyribonucleotide-(2,3-dehydro-2,3-deoxyribose 5'-phosphate)-DNA + a 5'-end 5'-phospho-2'-deoxyribonucleoside-DNA + H(+). Repair polymerase that plays a key role in base-excision repair. During this process, the damaged base is excised by specific DNA glycosylases, the DNA backbone is nicked at the abasic site by an apurinic/apyrimidic (AP) endonuclease, and POLB removes 5'-deoxyribose-phosphate from the preincised AP site acting as a 5'-deoxyribose-phosphate lyase (5'-dRP lyase); through its DNA polymerase activity, it adds one nucleotide to the 3' end of the arising single-nucleotide gap. Conducts 'gap-filling' DNA synthesis in a stepwise distributive fashion rather than in a processive fashion as for other DNA polymerases. It is also able to cleave sugar-phosphate bonds 3' to an intact AP site, acting as an AP lyase. The protein is DNA polymerase beta (Polb) of Mus musculus (Mouse).